We begin with the raw amino-acid sequence, 208 residues long: ATP synthase subunit b (208 aa).

The segment covering 1-18 (MFVSTAFAQTATESQPAS) has biased composition (polar residues). Positions 1–26 (MFVSTAFAQTATESQPASTAGEHGAA) are disordered. A helical transmembrane segment spans residues 56 to 78 (SQVLWLAITFGLFYLFLSRVVLP).

The protein belongs to the ATPase B chain family. In terms of assembly, F-type ATPases have 2 components, F(1) - the catalytic core - and F(0) - the membrane proton channel. F(1) has five subunits: alpha(3), beta(3), gamma(1), delta(1), epsilon(1). F(0) has three main subunits: a(1), b(2) and c(10-14). The alpha and beta chains form an alternating ring which encloses part of the gamma chain. F(1) is attached to F(0) by a central stalk formed by the gamma and epsilon chains, while a peripheral stalk is formed by the delta and b chains.

The protein resides in the cell inner membrane. Its function is as follows. F(1)F(0) ATP synthase produces ATP from ADP in the presence of a proton or sodium gradient. F-type ATPases consist of two structural domains, F(1) containing the extramembraneous catalytic core and F(0) containing the membrane proton channel, linked together by a central stalk and a peripheral stalk. During catalysis, ATP synthesis in the catalytic domain of F(1) is coupled via a rotary mechanism of the central stalk subunits to proton translocation. Component of the F(0) channel, it forms part of the peripheral stalk, linking F(1) to F(0). The chain is ATP synthase subunit b from Brucella melitensis biotype 1 (strain ATCC 23456 / CCUG 17765 / NCTC 10094 / 16M).